A 217-amino-acid chain; its full sequence is 3-oxoadipate CoA-transferase subunit B (217 aa).

Glu50 is a catalytic residue.

The protein belongs to the 3-oxoacid CoA-transferase subunit B family. Heterodimer.

It carries out the reaction 3-oxoadipate + succinyl-CoA = 3-oxoadipyl-CoA + succinate. The protein operates within aromatic compound metabolism; beta-ketoadipate pathway; acetyl-CoA and succinyl-CoA from 3-oxoadipate: step 1/2. In Acinetobacter baylyi (strain ATCC 33305 / BD413 / ADP1), this protein is 3-oxoadipate CoA-transferase subunit B (pcaJ).